We begin with the raw amino-acid sequence, 185 residues long: Peptidyl-tRNA hydrolase (185 aa).

Tyr14 is a binding site for tRNA. His19 acts as the Proton acceptor in catalysis. Residues Phe64, Asn66, and Asn112 each contribute to the tRNA site.

The protein belongs to the PTH family. In terms of assembly, monomer.

It is found in the cytoplasm. It carries out the reaction an N-acyl-L-alpha-aminoacyl-tRNA + H2O = an N-acyl-L-amino acid + a tRNA + H(+). Functionally, hydrolyzes ribosome-free peptidyl-tRNAs (with 1 or more amino acids incorporated), which drop off the ribosome during protein synthesis, or as a result of ribosome stalling. In terms of biological role, catalyzes the release of premature peptidyl moieties from peptidyl-tRNA molecules trapped in stalled 50S ribosomal subunits, and thus maintains levels of free tRNAs and 50S ribosomes. The chain is Peptidyl-tRNA hydrolase from Lacticaseibacillus paracasei (strain ATCC 334 / BCRC 17002 / CCUG 31169 / CIP 107868 / KCTC 3260 / NRRL B-441) (Lactobacillus paracasei).